Here is a 606-residue protein sequence, read N- to C-terminus: Sulfite reductase [NADPH] flavoprotein alpha-component (606 aa).

The Flavodoxin-like domain maps to 68–206 (ITILSASQTG…AAEAWRKEVT (139 aa)). FMN-binding positions include 74-79 (SQTGNA), 121-124 (STQG), and 157-166 (LGDITYEHFA). The 215-residue stretch at 240–454 (ESPLTATLSV…VEHNDNFRLP (215 aa)) folds into the FAD-binding FR-type domain. FAD contacts are provided by residues Thr328, Gln362, 392–395 (RLYS), 410–412 (TVG), Tyr416, and 425–428 (GGAS). Residues 525-526 (SR), 531-535 (KVYVQ), and Asp568 contribute to the NADP(+) site. Residue Tyr606 participates in FAD binding.

The protein belongs to the NADPH-dependent sulphite reductase flavoprotein subunit CysJ family. In the N-terminal section; belongs to the flavodoxin family. This sequence in the C-terminal section; belongs to the flavoprotein pyridine nucleotide cytochrome reductase family. Alpha(8)-beta(8). The alpha component is a flavoprotein, the beta component is a hemoprotein. Requires FAD as cofactor. FMN is required as a cofactor.

It catalyses the reaction hydrogen sulfide + 3 NADP(+) + 3 H2O = sulfite + 3 NADPH + 4 H(+). It functions in the pathway sulfur metabolism; hydrogen sulfide biosynthesis; hydrogen sulfide from sulfite (NADPH route): step 1/1. Functionally, component of the sulfite reductase complex that catalyzes the 6-electron reduction of sulfite to sulfide. This is one of several activities required for the biosynthesis of L-cysteine from sulfate. The flavoprotein component catalyzes the electron flow from NADPH -&gt; FAD -&gt; FMN to the hemoprotein component. This chain is Sulfite reductase [NADPH] flavoprotein alpha-component, found in Zymomonas mobilis subsp. mobilis (strain ATCC 31821 / ZM4 / CP4).